A 443-amino-acid polypeptide reads, in one-letter code: uncharacterized protein (443 aa).

This is an uncharacterized protein from Mycoplasma genitalium (strain ATCC 33530 / DSM 19775 / NCTC 10195 / G37) (Mycoplasmoides genitalium).